The following is a 2258-amino-acid chain: Genome polyprotein 1 (2258 aa).

In terms of domain architecture, Helicase ATP-binding spans 439–597; the sequence is SMAQEAKQWS…AVRRYEIKTV (159 aa). Residue 487–494 participates in ATP binding; sequence RAATVNVT. The Helicase C-terminal domain occupies 612–778; the sequence is DKENSLYVLQ…GVQFYINEHF (167 aa). O-(5'-phospho-RNA)-tyrosine is present on Tyr1141. The Peptidase C4 domain occupies 1257–1476; it reads ATLEGMTMKP…TKPRNMQSAP (220 aa). Active-site for nuclear inclusion protein A activity residues include His1302, Asp1338, and Cys1405. Positions 1745–1869 constitute a RdRp catalytic domain; the sequence is WTHGSGDGSR…AMSPSFMVKF (125 aa). Disordered regions lie at residues 2027-2047 and 2233-2258; these read NMAA…RGTS and TSEQ…ALLR. Over residues 2242–2258 the composition is skewed to basic and acidic residues; the sequence is TETRRRNDYDGHEALLR.

It belongs to the bymoviruses polyprotein 1 family. In terms of processing, VPg is uridylylated by the polymerase and is covalently attached to the 5'-end of the genomic RNA. This uridylylated form acts as a nucleotide-peptide primer for the polymerase. The viral RNA1 of bymoviruses is expressed as a single polyprotein which undergoes post-translational proteolytic processing by the main proteinase NIa-pro resulting in the production of at least eight individual proteins.

It localises to the host cytoplasmic vesicle. The protein localises to the virion. The enzyme catalyses RNA(n) + a ribonucleoside 5'-triphosphate = RNA(n+1) + diphosphate. The catalysed reaction is Hydrolyzes glutaminyl bonds, and activity is further restricted by preferences for the amino acids in P6 - P1' that vary with the species of potyvirus, e.g. Glu-Xaa-Xaa-Tyr-Xaa-Gln-|-(Ser or Gly) for the enzyme from tobacco etch virus. The natural substrate is the viral polyprotein, but other proteins and oligopeptides containing the appropriate consensus sequence are also cleaved.. Indispensable for virus replication. Functionally, mediates the cap-independent, EIF4E-dependent translation of viral genomic RNAs. Binds to the cap-binding site of host EIF4E and thus interferes with the host EIF4E-dependent mRNA export and translation. VPg-RNA directly binds EIF4E and is a template for transcription. Also forms trimeric complexes with EIF4E-EIF4G, which are templates for translation. In terms of biological role, has RNA-binding and proteolytic activities. Its function is as follows. An RNA-dependent RNA polymerase that plays an essential role in the virus replication. In Barley mild mosaic virus (strain Na1) (BaMMV), this protein is Genome polyprotein 1.